The following is a 790-amino-acid chain: Cadherin-18 (790 aa).

The signal sequence occupies residues M1–G24. A propeptide spanning residues T25 to R53 is cleaved from the precursor. The N-linked (GlcNAc...) asparagine glycan is linked to N36. Cadherin domains lie at G54–F159, T160–F268, P269–F383, S384–P486, and E487–S608. Residues G54 to S608 are Extracellular-facing. N-linked (GlcNAc...) asparagine glycosylation occurs at N255. Residues N455 and N536 are each glycosylated (N-linked (GlcNAc...) asparagine). The chain crosses the membrane as a helical span at residues A609–L636. Residues R637 to T790 lie on the Cytoplasmic side of the membrane. The residue at position 786 (S786) is a Phosphoserine.

Its subcellular location is the cell membrane. Functionally, cadherins are calcium-dependent cell adhesion proteins. They preferentially interact with themselves in a homophilic manner in connecting cells; cadherins may thus contribute to the sorting of heterogeneous cell types. The chain is Cadherin-18 (CDH18) from Homo sapiens (Human).